The sequence spans 442 residues: Putative mannan endo-1,6-alpha-mannosidase C970.02 (442 aa).

The first 19 residues, 1–19 (MSLTIFISLATILFSFAEA), serve as a signal peptide directing secretion. N-linked (GlcNAc...) asparagine glycans are attached at residues Asn-25, Asn-82, Asn-107, Asn-131, Asn-201, Asn-236, Asn-261, Asn-264, Asn-277, and Asn-361.

It belongs to the glycosyl hydrolase 76 family.

It catalyses the reaction Random hydrolysis of (1-&gt;6)-alpha-D-mannosidic linkages in unbranched (1-&gt;6)-mannans.. This is Putative mannan endo-1,6-alpha-mannosidase C970.02 from Schizosaccharomyces pombe (strain 972 / ATCC 24843) (Fission yeast).